Consider the following 269-residue polypeptide: UPF0761 membrane protein NTHI0384 (269 aa).

6 helical membrane-spanning segments follow: residues 32 to 52 (MLAI…FPVF), 89 to 109 (MSAV…NNID), 128 to 148 (FAIY…SIGI), 168 to 188 (LLSF…YTVV), 203 to 223 (FLAA…VVTF), and 232 to 252 (AMAT…VVLV).

Belongs to the UPF0761 family.

The protein resides in the cell inner membrane. This chain is UPF0761 membrane protein NTHI0384, found in Haemophilus influenzae (strain 86-028NP).